We begin with the raw amino-acid sequence, 325 residues long: MTTFNTISVIGAGAWGTALANACARAGRQVTLYGRSTDVLAAIAARGENPRLPGITLEKSIRVTHDLAESAKADALLLVTPTQSLREAMIALAPHVADATPLVICAKGIERGTRKFVTEIATEVLPQTRPAILSGPSFAADVARGLPTAVTLAAAEEPLAVALTHALGSSSLRPYHTTDVRGVEIGGAVKNVLAIAAGIAAGKALGASALAALTTRSFAELMRFGLACGAHRETIAGLSGLGDLILTCSSAQSRNFTFGMALGRGEAPPGSLSEGQSTAPVLIEIARAQAIEMPVAEAVANVLAGAITVNEGIEMLLARPFRAEG.

Positions 15, 35, and 107 each coordinate NADPH. Sn-glycerol 3-phosphate-binding residues include lysine 107, glycine 135, and serine 137. Alanine 139 is an NADPH binding site. The sn-glycerol 3-phosphate site is built by lysine 190, aspartate 243, serine 253, arginine 254, and asparagine 255. Lysine 190 serves as the catalytic Proton acceptor. Arginine 254 provides a ligand contact to NADPH. 2 residues coordinate NADPH: leucine 272 and glutamate 274.

It belongs to the NAD-dependent glycerol-3-phosphate dehydrogenase family.

The protein resides in the cytoplasm. The catalysed reaction is sn-glycerol 3-phosphate + NAD(+) = dihydroxyacetone phosphate + NADH + H(+). It catalyses the reaction sn-glycerol 3-phosphate + NADP(+) = dihydroxyacetone phosphate + NADPH + H(+). Its pathway is membrane lipid metabolism; glycerophospholipid metabolism. Catalyzes the reduction of the glycolytic intermediate dihydroxyacetone phosphate (DHAP) to sn-glycerol 3-phosphate (G3P), the key precursor for phospholipid synthesis. The polypeptide is Glycerol-3-phosphate dehydrogenase [NAD(P)+] (Afipia carboxidovorans (strain ATCC 49405 / DSM 1227 / KCTC 32145 / OM5) (Oligotropha carboxidovorans)).